Reading from the N-terminus, the 354-residue chain is AKPAAENLSLVVHGPGDLRLENYPIPEPGPNEVLLKMHSVGICGSDVHYWQGRIGDFVVKKPMVLGHEASGTVVKVGSLVRHLQPGDRVAIQPGAPRQTDEFCKIGRYNLSPTIFFCATPPDDGNLCRFYKHNANFCYKLPDNVTFEEGALIEPLSVGIHACRRAGVTLGNKVLVCGAGPIGLVNLLAAKAMGAAQVVVTDLSASRLSKAKEVGADFILEISNESPEEIAKKVEGLLGSKPEVTIECTGVETSIQAGIYATHSGGTLVLVGLGSEMTSVPLVHAATREVDIKGVFRYCNTWPMAISMLASKSVNVKPLVTHRFPLEKALEAFETSKKGLGLKVMIKCDPSDQNP.

Residue Cys-43 coordinates Zn(2+). Tyr-49 contacts substrate. 2 residues coordinate Zn(2+): His-67 and Glu-68. Glu-153 lines the substrate pocket. The NAD(+) site is built by Ile-181, Asp-201, and Arg-206. Phosphoserine is present on residues Ser-208 and Ser-222. Residues 270 to 272 (VGL) and 294 to 296 (VFR) each bind NAD(+). Substrate contacts are provided by Arg-296 and Tyr-297.

This sequence belongs to the zinc-containing alcohol dehydrogenase family. In terms of assembly, homotetramer. Zn(2+) serves as cofactor. As to expression, expressed in liver.

It is found in the mitochondrion membrane. The protein localises to the cell projection. Its subcellular location is the cilium. The protein resides in the flagellum. The enzyme catalyses xylitol + NAD(+) = D-xylulose + NADH + H(+). It carries out the reaction L-iditol + NAD(+) = keto-L-sorbose + NADH + H(+). It catalyses the reaction keto-D-fructose + NADH + H(+) = D-sorbitol + NAD(+). Polyol dehydrogenase that catalyzes the reversible NAD(+)-dependent oxidation of various sugar alcohols. Is mostly active with xylitol, L-iditol and D-sorbitol (D-glucitol) as substrates, leading to the C2-oxidized products D-xylulose, L-sorbose and D-fructose, respectively. Is a key enzyme in the polyol pathway that interconverts glucose and fructose via sorbitol, which constitutes an important alternate route for glucose metabolism. May play a role in sperm motility by using sorbitol as an alternative energy source for sperm motility. The protein is Sorbitol dehydrogenase (SORD) of Ovis aries (Sheep).